The chain runs to 301 residues: Bifunctional protein FolD (301 aa).

NADP(+) is bound by residues 164–166 (GRS), S191, and I232.

This sequence belongs to the tetrahydrofolate dehydrogenase/cyclohydrolase family. In terms of assembly, homodimer.

It catalyses the reaction (6R)-5,10-methylene-5,6,7,8-tetrahydrofolate + NADP(+) = (6R)-5,10-methenyltetrahydrofolate + NADPH. It carries out the reaction (6R)-5,10-methenyltetrahydrofolate + H2O = (6R)-10-formyltetrahydrofolate + H(+). It functions in the pathway one-carbon metabolism; tetrahydrofolate interconversion. Functionally, catalyzes the oxidation of 5,10-methylenetetrahydrofolate to 5,10-methenyltetrahydrofolate and then the hydrolysis of 5,10-methenyltetrahydrofolate to 10-formyltetrahydrofolate. This is Bifunctional protein FolD from Borrelia garinii subsp. bavariensis (strain ATCC BAA-2496 / DSM 23469 / PBi) (Borreliella bavariensis).